Here is a 129-residue protein sequence, read N- to C-terminus: Small ribosomal subunit protein uS11 (129 aa).

This sequence belongs to the universal ribosomal protein uS11 family. As to quaternary structure, part of the 30S ribosomal subunit. Interacts with proteins S7 and S18. Binds to IF-3.

In terms of biological role, located on the platform of the 30S subunit, it bridges several disparate RNA helices of the 16S rRNA. Forms part of the Shine-Dalgarno cleft in the 70S ribosome. The protein is Small ribosomal subunit protein uS11 of Methylobacterium nodulans (strain LMG 21967 / CNCM I-2342 / ORS 2060).